A 515-amino-acid polypeptide reads, in one-letter code: Bifunctional purine biosynthesis protein PurH (515 aa).

Residues 1–145 enclose the MGS-like domain; sequence MTKRVLISVS…KNHASVTVVV (145 aa).

It belongs to the PurH family.

It catalyses the reaction (6R)-10-formyltetrahydrofolate + 5-amino-1-(5-phospho-beta-D-ribosyl)imidazole-4-carboxamide = 5-formamido-1-(5-phospho-D-ribosyl)imidazole-4-carboxamide + (6S)-5,6,7,8-tetrahydrofolate. It carries out the reaction IMP + H2O = 5-formamido-1-(5-phospho-D-ribosyl)imidazole-4-carboxamide. It functions in the pathway purine metabolism; IMP biosynthesis via de novo pathway; 5-formamido-1-(5-phospho-D-ribosyl)imidazole-4-carboxamide from 5-amino-1-(5-phospho-D-ribosyl)imidazole-4-carboxamide (10-formyl THF route): step 1/1. It participates in purine metabolism; IMP biosynthesis via de novo pathway; IMP from 5-formamido-1-(5-phospho-D-ribosyl)imidazole-4-carboxamide: step 1/1. This is Bifunctional purine biosynthesis protein PurH from Streptococcus pneumoniae serotype 19F (strain G54).